A 300-amino-acid chain; its full sequence is Telomere repeat-binding factor 1 (300 aa).

Residues 1–58 (MGAPKQKWTQEEESALKSGVIKHGPGKWRTILKDPEFSGVLYLRSNVDLKDKWRNMSV) enclose the HTH myb-type domain. Residues 28–57 (WRTILKDPEFSGVLYLRSNVDLKDKWRNMS) constitute a DNA-binding region (H-T-H motif). Disordered stretches follow at residues 93 to 119 (LQSDEENVDATSGLQVSSNPPPRRPNV) and 185 to 213 (NSTPLSSHRRKGLGVFGGKQRTSSLPSPK). The H15 domain maps to 117 to 185 (PNVRLDSLIM…KVKRKYRIPN (69 aa)). Residues 241–290 (EAAAVAAQAVAEAEAAMAEAEEAAKEAEAAEAEAEAAQAFAEEASKTLKG) are a coiled coil.

Belongs to the histone H1/H5 family. SMH subfamily. In terms of assembly, forms a homodimer and heterodimers with TRB2 or TRB3. Interacts with POT1b, TRB2 and TRB3 through its H15 domain.

It is found in the nucleus. It localises to the nucleolus. The protein localises to the chromosome. Binds preferentially double-stranded telomeric repeats. This is Telomere repeat-binding factor 1 (TRB1) from Arabidopsis thaliana (Mouse-ear cress).